A 303-amino-acid chain; its full sequence is MAHYHDDYGKNDEVEFVRTGYGKDMVKVLHIQRDGKYHSIKEVATSVQLTLRSKKDYLHGDNSDIIPTDTIKNTVHVLAKFKGIKSIETFAMNICEHFLSSFSHVTRAHVYVEEVPWKRFEKNGVKHVHAFIHTPTGTHFCDVEQVRNGPPIIHSGIKDLKVLKTTQSGFEGFIKDQFTTLPEVKDRCFATQVYCKWRYQNRDVDFEATWGAVRDIVLKKFAGPYDRGEYSPSVQKTLYDIQVLTLSQLPEIEDMEISLPNIHYFNIDMSKMGLINKEEVLLPLDNPYGKITGTVRRKLPSRL.

Position 2 is an N-acetylalanine (A2). An N6-acetyllysine; alternate mark is found at K10 and K23. N6-succinyllysine; alternate occurs at positions 10 and 23. Residue K23 is the Charge relay system of the active site. K27 and K36 each carry N6-acetyllysine. Residues S39 and S63 each carry the phosphoserine modification. T68 (charge relay system) is an active-site residue. Urate-binding residues include T68 and D69. 3 positions are modified to N6-acetyllysine: K118, K122, and K164. Position 170 (F170) interacts with urate. N6-acetyllysine occurs at positions 175 and 185. R187 is a binding site for urate. K220 bears the N6-acetyllysine; alternate mark. K220 carries the post-translational modification N6-succinyllysine; alternate. Phosphoserine is present on S231. Positions 234, 235, and 261 each coordinate urate. Residue H263 is the Charge relay system of the active site. The residue at position 277 (K277) is an N6-acetyllysine. Residue Y288 is modified to Phosphotyrosine. Residues 301–303 (SRL) carry the Microbody targeting signal motif.

The protein belongs to the uricase family. As to expression, expressed in liver. Not detected in other tissues tested.

The protein localises to the peroxisome. The enzyme catalyses urate + O2 + H2O = 5-hydroxyisourate + H2O2. It participates in purine metabolism; urate degradation; (S)-allantoin from urate: step 1/3. Its activity is regulated as follows. Competitively inhibited by xanthine. In terms of biological role, catalyzes the oxidation of uric acid to 5-hydroxyisourate, which is further processed to form (S)-allantoin. This chain is Uricase (Uox), found in Rattus norvegicus (Rat).